The following is a 90-amino-acid chain: Protein S100-A6 (90 aa).

2 consecutive EF-hand domains span residues 12-47 and 48-83; these read LVAI…IGSK and LQDA…LALI. The Ca(2+) site is built by threonine 28 and glutamate 33. Lysine 40 carries the post-translational modification N6-acetyllysine. Phosphoserine is present on serine 46. Lysine 47 is modified (N6-acetyllysine; alternate). Lysine 47 bears the N6-succinyllysine; alternate mark. Ca(2+) contacts are provided by aspartate 61, asparagine 63, aspartate 65, glutamate 67, and glutamate 72.

It belongs to the S-100 family. Homodimer; head to tail assembly of 2 subunits. Interacts with CACYBP in a calcium-dependent manner. Interacts with ANXA2 and ANXA11 (via N-terminus). Interacts with SUGT1. Interacts with TP53; has higher affinity for TP53 that is phosphorylated on its N-terminal domain, and lower affinity for TP53 that is phosphorylated on its C-terminal domain. Interacts with tropomyosin. Interacts with FKBP4. Interacts with PPP5C (via TPR repeats); the interaction is calcium-dependent and modulates PPP5C activity. Interacts with TPPP; this interaction inhibits TPPP dimerization. The N-terminus is blocked.

Its subcellular location is the nucleus envelope. It is found in the cytoplasm. The protein resides in the cell membrane. Functionally, may function as calcium sensor and modulator, contributing to cellular calcium signaling. May function by interacting with other proteins, such as TPR-containing proteins, and indirectly play a role in many physiological processes such as the reorganization of the actin cytoskeleton and in cell motility. Binds 2 calcium ions. Calcium binding is cooperative. The polypeptide is Protein S100-A6 (S100A6) (Homo sapiens (Human)).